The chain runs to 75 residues: Chaplin-D (75 aa).

Residues 1-23 (MKKSAAVVAGAIMALGMAAPAFA) form the signal peptide. The Chaplin domain maps to 34–74 (SPGVLSGNVIQVPVHVPVNVCGNSINVVGLLNPAFGNKCEN). C54 and C72 are oxidised to a cystine.

Belongs to the chaplin family. Short chaplin subfamily.

It is found in the cell surface. Its subcellular location is the secreted. It localises to the cell wall. The protein resides in the fimbrium. Functionally, one of 8 partially redundant surface-active proteins required for efficient formation of aerial mycelium; the short chaplins assemble into a hydrophobic, amyloidal fibrillar surface layer that envelopes and protects aerial hyphae and spores, presumably anchored to the long chaplins. Chaplins have an overlapping function with the surface-active SapB peptide; chaplins are essential on minimal medium while on rich medium both chaplins and SapB are required for efficient aerial hyphae formation. Chaplins are also involved in cell attachment to a hydrophobic surface. Forms amyloid fibrils in vitro probably composed of stacked beta-sheets, at low extracellular concentrations individually restores the ability to form aerial hyphae to a chaplin-deficient strain. A small chaplin extract (ChpD, ChpE, ChpF, ChpG and ChpH) self-assembles into 2 different amyloids; small fibrils at the air-water interface form an amphipathic membrane that resembles spore-surface structures involved in aerial hyphae formation, and hydrophilic fibrils in solution that resemble the fibers that attach cells to a hydrophobic surface. At the air-water interface the hydrophilic surface is in contact with water (probably equivalent to the peptidoglycan layer), while the hydrophobic face is exposed to the air, making the surface of the aerial hyphae hydrophobic. A minimal chaplin strain capable of forming aerial mycelium/hyphae on minimal medium contains ChpC, ChpE and ChpH. The strain also has restored rodlet formation on the hyphae surface. A second minimal chaplin strain with ChpA, ChpD and ChpE makes slightly less robust hyphae. A small chaplin extract applied to a chaplin-deficient strain restores aerial hyphae formation. The small chaplin extract forms an amyloid-like structure similar to that seen on the surface of cells without rodlets (rdlA-rdlB deletions), and is highly surface active, reducing surface tension from 72 to 26 mJ/m(2), which probably allows escape of hyphae from an aqueous environment into air. The sequence is that of Chaplin-D from Streptomyces coelicolor (strain ATCC BAA-471 / A3(2) / M145).